The primary structure comprises 280 residues: Shikimate dehydrogenase (NADP(+)) (280 aa).

Residues 18 to 20 and T65 contribute to the shikimate site; that span reads SRS. K69 serves as the catalytic Proton acceptor. N90 and D105 together coordinate shikimate. Residues 130–134, 154–159, and L219 contribute to the NADP(+) site; these read GAGGA and NRTLAR. Shikimate is bound at residue Y221. G242 contacts NADP(+).

The protein belongs to the shikimate dehydrogenase family. Homodimer.

The catalysed reaction is shikimate + NADP(+) = 3-dehydroshikimate + NADPH + H(+). The protein operates within metabolic intermediate biosynthesis; chorismate biosynthesis; chorismate from D-erythrose 4-phosphate and phosphoenolpyruvate: step 4/7. Functionally, involved in the biosynthesis of the chorismate, which leads to the biosynthesis of aromatic amino acids. Catalyzes the reversible NADPH linked reduction of 3-dehydroshikimate (DHSA) to yield shikimate (SA). This is Shikimate dehydrogenase (NADP(+)) from Mesorhizobium japonicum (strain LMG 29417 / CECT 9101 / MAFF 303099) (Mesorhizobium loti (strain MAFF 303099)).